Here is a 62-residue protein sequence, read N- to C-terminus: uncharacterized protein (62 aa).

The segment at 1–62 (MSSTAEEMAA…SNGEAKRKEK (62 aa)) is disordered. Residues 28-37 (TKSDRVEHKH) are compositionally biased toward basic and acidic residues.

This is an uncharacterized protein from Caenorhabditis elegans.